Consider the following 89-residue polypeptide: Small ribosomal subunit protein uS15 (89 aa).

Belongs to the universal ribosomal protein uS15 family. In terms of assembly, part of the 30S ribosomal subunit. Forms a bridge to the 50S subunit in the 70S ribosome, contacting the 23S rRNA.

Its function is as follows. One of the primary rRNA binding proteins, it binds directly to 16S rRNA where it helps nucleate assembly of the platform of the 30S subunit by binding and bridging several RNA helices of the 16S rRNA. Functionally, forms an intersubunit bridge (bridge B4) with the 23S rRNA of the 50S subunit in the ribosome. In Erwinia tasmaniensis (strain DSM 17950 / CFBP 7177 / CIP 109463 / NCPPB 4357 / Et1/99), this protein is Small ribosomal subunit protein uS15.